A 187-amino-acid polypeptide reads, in one-letter code: ATP synthase subunit b (187 aa).

The chain crosses the membrane as a helical span at residues 31-51; it reads VAIMGLAIFVLFLILSYLLFN.

The protein belongs to the ATPase B chain family. As to quaternary structure, F-type ATPases have 2 components, F(1) - the catalytic core - and F(0) - the membrane proton channel. F(1) has five subunits: alpha(3), beta(3), gamma(1), delta(1), epsilon(1). F(0) has three main subunits: a(1), b(2) and c(10-14). The alpha and beta chains form an alternating ring which encloses part of the gamma chain. F(1) is attached to F(0) by a central stalk formed by the gamma and epsilon chains, while a peripheral stalk is formed by the delta and b chains.

Its subcellular location is the cell membrane. F(1)F(0) ATP synthase produces ATP from ADP in the presence of a proton or sodium gradient. F-type ATPases consist of two structural domains, F(1) containing the extramembraneous catalytic core and F(0) containing the membrane proton channel, linked together by a central stalk and a peripheral stalk. During catalysis, ATP synthesis in the catalytic domain of F(1) is coupled via a rotary mechanism of the central stalk subunits to proton translocation. In terms of biological role, component of the F(0) channel, it forms part of the peripheral stalk, linking F(1) to F(0). The polypeptide is ATP synthase subunit b (Lachnoclostridium phytofermentans (strain ATCC 700394 / DSM 18823 / ISDg) (Clostridium phytofermentans)).